Consider the following 1865-residue polypeptide: Transient receptor potential cation channel subfamily M member 7 (1865 aa).

Methionine 1 carries the post-translational modification N-acetylmethionine. Residues 1–850 (MSQKSWIEST…ITRKFYAFYH (850 aa)) are Cytoplasmic-facing. Serine 101 is subject to Phosphoserine. The span at 544–555 (NRRSGRNTSSST) shows a compositional bias: low complexity. Residues 544 to 575 (NRRSGRNTSSSTPQLRKSHESFGNRADKKEKM) are disordered. Positions 560-573 (KSHESFGNRADKKE) are enriched in basic and acidic residues. Residues 851–876 (APIVKFWFNTLAYLGFLMLYTFVVLV) traverse the membrane as a helical segment. Residues 877–882 (QMEQLP) are Extracellular-facing. A helical membrane pass occupies residues 883–904 (SVQEWIVIAYIFTYAIEKVREI). At 905–923 (FMSEAGKVNQKIKVWFSDY) the chain is on the cytoplasmic side. A helical membrane pass occupies residues 924-943 (FNISDTIAIISFFIGFGLRF). The Extracellular portion of the chain corresponds to 944 to 956 (GAKWNFANAYDNH). Residues 957 to 980 (VFVAGRLIYCLNIIFWYVRLLDFL) traverse the membrane as a helical segment. Residues 981–999 (AVNQQAGPYVMMIGKMVAN) lie on the Cytoplasmic side of the membrane. A helical transmembrane segment spans residues 1000 to 1023 (MFYIVVIMALVLLSFGVPRKAILY). Over 1024–1025 (PH) the chain is Extracellular. The segment at residues 1026–1066 (EAPSWTLAKDIVFHPYWMIFGEVYAYEIDVCANDSVIPQIC) is an intramembrane region (pore-forming). Over 1067-1069 (GPG) the chain is Extracellular. The helical transmembrane segment at 1070 to 1098 (TWLTPFLQAVYLFVQYIIMVNLLIAFFNN) threads the bilayer. Over 1099 to 1865 (VYLQVKAISN…ESTNSVRLML (767 aa)) the chain is Cytoplasmic. S-palmitoyl cysteine attachment occurs at residues cysteine 1143, cysteine 1144, and cysteine 1146. Residue threonine 1163 is modified to Phosphothreonine; by autocatalysis. Serine 1191 and serine 1193 each carry phosphoserine; by autocatalysis. Residues 1198 to 1250 (RVTFERVEQMCIQIKEVGDRVNYIKRSLQSLDSQIGHLQDLSALTVDTLKTLT) are a coiled coil. The residue at position 1224 (serine 1224) is a Phosphoserine. Serine 1255 and serine 1258 each carry phosphoserine; by autocatalysis. Threonine 1265 is subject to Phosphothreonine; by autocatalysis. Serine 1287 is modified (phosphoserine; by autocatalysis). Position 1301 is a phosphoserine (serine 1301). The residue at position 1358 (serine 1358) is a Phosphoserine; by autocatalysis. Phosphoserine occurs at positions 1361 and 1386. The span at 1386–1398 (SSSTSIPHLSSPP) shows a compositional bias: low complexity. The disordered stretch occupies residues 1386–1407 (SSSTSIPHLSSPPTKFFVSTPS). A phosphoserine; by autocatalysis mark is found at serine 1387 and serine 1390. A phosphoserine mark is found at serine 1395 and serine 1396. Position 1404 is a phosphoserine; by autocatalysis (serine 1404). Threonine 1405 is subject to Phosphothreonine; by autocatalysis. Residue serine 1407 is modified to Phosphoserine; by autocatalysis. Position 1435 is a phosphothreonine; by autocatalysis (threonine 1435). Serine 1446 bears the Phosphoserine; by autocatalysis mark. Threonine 1455 bears the Phosphothreonine; by autocatalysis mark. Phosphoserine; by autocatalysis occurs at positions 1456 and 1463. A Phosphothreonine modification is found at threonine 1467. Residue serine 1468 is modified to Phosphoserine; by autocatalysis. The residue at position 1471 (threonine 1471) is a Phosphothreonine; by autocatalysis. A phosphoserine; by autocatalysis mark is found at serine 1476 and serine 1477. The residue at position 1482 (threonine 1482) is a Phosphothreonine; by autocatalysis. Residues 1492-1511 (HSKQAEKISRRPSTEDTHEV) form a disordered region. Serine 1493 is modified (phosphoserine; by autocatalysis). The span at 1494 to 1511 (KQAEKISRRPSTEDTHEV) shows a compositional bias: basic and acidic residues. Serine 1500 is subject to Phosphoserine. Serine 1504 is modified (phosphoserine; by autocatalysis). Threonine 1508 carries the post-translational modification Phosphothreonine; by autocatalysis. A phosphoserine; by autocatalysis mark is found at serine 1513, serine 1527, and serine 1533. Residues 1524 to 1543 (DRPSNREMPSEEGTLNGLTS) form a disordered region. 2 positions are modified to phosphothreonine; by autocatalysis: threonine 1537 and threonine 1542. Position 1543 is a phosphoserine; by autocatalysis (serine 1543). Residue threonine 1551 is modified to Phosphothreonine; by autocatalysis. Phosphoserine; by autocatalysis occurs at positions 1567 and 1569. Threonine 1583 is subject to Phosphothreonine; by autocatalysis. The Alpha-type protein kinase domain maps to 1594-1824 (ILNNSMSSWS…CCRKLKLPDL (231 aa)). Residues serine 1598 and serine 1615 each carry the phosphoserine; by autocatalysis modification. Glycine 1621, glycine 1622, leucine 1623, arginine 1624, and lysine 1648 together coordinate ADP. A Phosphoserine; by autocatalysis modification is found at serine 1660. Threonine 1685 is subject to Phosphothreonine; by autocatalysis. Glutamate 1720, glutamate 1721, and methionine 1723 together coordinate ADP. Residue histidine 1753 participates in Zn(2+) binding. Residue aspartate 1767 is the Proton acceptor of the active site. ADP is bound at residue aspartate 1777. Serine 1779 carries the phosphoserine; by autocatalysis modification. Zn(2+) is bound by residues histidine 1810, cysteine 1812, and cysteine 1816. A Phosphothreonine; by autocatalysis modification is found at threonine 1830. The interval 1836–1865 (FPQDEPSDLNLQPGNSTKESESTNSVRLML) is disordered. Residues 1844-1865 (LNLQPGNSTKESESTNSVRLML) are compositionally biased toward polar residues. The residue at position 1851 (serine 1851) is a Phosphoserine. At serine 1860 the chain carries Phosphoserine; by autocatalysis.

It in the C-terminal section; belongs to the protein kinase superfamily. Alpha-type protein kinase family. ALPK subfamily. The protein in the N-terminal section; belongs to the transient receptor (TC 1.A.4) family. LTrpC subfamily. TRPM7 sub-subfamily. In terms of assembly, homotetramer. Interacts with PLCB1. Forms heteromers with TRPM6; heteromeric channels are functionally different from the homomeric channels. Zn(2+) is required as a cofactor. Palmitoylated; palmitoylation at Cys-1143, Cys-1144 and Cys-1146 promotes TRPM7 trafficking from the Golgi to the surface membrane. Post-translationally, autophosphorylated; autophosphorylation of C-terminus regulates TRPM7 kinase activity towards its substrates. In terms of processing, the C-terminal kinase domain can be cleaved from the channel segment in a cell-type-specific fashion. TRPM7 is cleaved by caspase-8, dissociating the kinase from the ion-conducting pore. The cleaved kinase fragments (M7CKs) can translocate to the cell nucleus and binds chromatin-remodeling complex proteins in a Zn(2+)-dependent manner to ultimately phosphorylate specific Ser/Thr residues of histones.

The protein localises to the cell membrane. It is found in the cytoplasmic vesicle membrane. Its subcellular location is the nucleus. It catalyses the reaction L-seryl-[protein] + ATP = O-phospho-L-seryl-[protein] + ADP + H(+). The enzyme catalyses L-threonyl-[protein] + ATP = O-phospho-L-threonyl-[protein] + ADP + H(+). It carries out the reaction Mg(2+)(in) = Mg(2+)(out). The catalysed reaction is Ca(2+)(in) = Ca(2+)(out). It catalyses the reaction Zn(2+)(in) = Zn(2+)(out). With respect to regulation, channel displays constitutive activity. Channel activity is negatively regulated by cytosolic Mg(2+) and Mg-ATP. Channel activity is negatively regulated by low intracellular pH. Resting free cytosolic Mg(2+) and Mg-ATP concentrations seem to be sufficient to block native TRPM7 channel activity. TRPM7 channel activity is highly dependent on membrane levels of phosphatidylinositol 4,5 bisphosphate (PIP2). PIP2 hydrolysis negatively regulates TRPM7 channel activity. TRPM7 kinase activity does not affect channel activity. The kinase activity is controlled through the autophosphorylation of a serine/threonine-rich region located N-terminal to the catalytic domain. Its function is as follows. Bifunctional protein that combines an ion channel with an intrinsic kinase domain, enabling it to modulate cellular functions either by conducting ions through the pore or by phosphorylating downstream proteins via its kinase domain. The channel is highly permeable to divalent cations, specifically calcium (Ca2+), magnesium (Mg2+) and zinc (Zn2+) and mediates their influx. Controls a wide range of biological processes such as Ca2(+), Mg(2+) and Zn(2+) homeostasis, vesicular Zn(2+) release channel and intracellular Ca(2+) signaling, embryonic development, immune responses, cell motility, proliferation and differentiation. The C-terminal alpha-kinase domain autophosphorylates cytoplasmic residues of TRPM7. In vivo, TRPM7 phosphorylates SMAD2, suggesting that TRPM7 kinase may play a role in activating SMAD signaling pathways. In vitro, TRPM7 kinase phosphorylates ANXA1 (annexin A1), myosin II isoforms and a variety of proteins with diverse cellular functions. The cleaved channel exhibits substantially higher current and potentiates Fas receptor signaling. In terms of biological role, the C-terminal kinase domain can be cleaved from the channel segment in a cell-type-specific fashion. In immune cells, the TRPM7 kinase domain is clipped from the channel domain by caspases in response to Fas-receptor stimulation. The cleaved kinase fragments can translocate to the nucleus, and bind chromatin-remodeling complex proteins in a Zn(2+)-dependent manner to ultimately phosphorylate specific Ser/Thr residues of histones known to be functionally important for cell differentiation and embryonic development. The polypeptide is Transient receptor potential cation channel subfamily M member 7 (TRPM7) (Homo sapiens (Human)).